The following is a 361-amino-acid chain: Ataxin-3 (361 aa).

M1 is covalently cross-linked (Peptide (Met-Gly) (interchain with G-Cter in ubiquitin)). The Josephin domain maps to 1–180 (MESIFHEKQE…DCEADQLLQM (180 aa)). The Nucleophile role is filled by C14. H119 (proton acceptor) is an active-site residue. N134 is a catalytic residue. A Glycyl lysine isopeptide (Lys-Gly) (interchain with G-Cter in ubiquitin) cross-link involves residue K200. S219 is modified (phosphoserine). UIM domains lie at 224–243 (EDEE…IDME) and 244–263 (DEEA…SSRN). A compositionally biased stretch (polar residues) spans 258 to 278 (QGSSRNISQDMTQTSGTNLTS). A disordered region spans residues 258 to 338 (QGSSRNISQD…DLGDAMSEED (81 aa)). Phosphoserine is present on residues S265 and S272. A compositionally biased stretch (basic and acidic residues) spans 279–293 (EELRKRREAYFEKQQ). The segment covering 294–305 (QKQQQQQQQQQQ) has biased composition (low complexity). Polar residues predominate over residues 306 to 325 (GDLSGQSSHPCERPATSSGA). At S328 the chain carries Phosphoserine. In terms of domain architecture, UIM 3 spans 331 to 349 (GDAMSEEDMLQAAVTMSLE).

In terms of assembly, interacts with STUB1/CHIP (when monoubiquitinated). Interacts with DNA repair proteins RAD23A and RAD23B. Interacts with BECN1 (via its poly-Gln domain). Interacts with PRKN, UBR2, VCP and tubulin. Short isoform 1 interacts with CASP7. Post-translationally, monoubiquitinated N-terminally by UBE2W, possibly leading to activate the deubiquitinating enzyme activity. As to expression, ubiquitous.

Its subcellular location is the nucleus matrix. It is found in the nucleus. It localises to the lysosome membrane. It carries out the reaction Thiol-dependent hydrolysis of ester, thioester, amide, peptide and isopeptide bonds formed by the C-terminal Gly of ubiquitin (a 76-residue protein attached to proteins as an intracellular targeting signal).. In terms of biological role, deubiquitinating enzyme involved in protein homeostasis maintenance, transcription, cytoskeleton regulation, myogenesis and degradation of misfolded chaperone substrates. Binds long polyubiquitin chains and trims them, while it has weak or no activity against chains of 4 or less ubiquitins. Involved in degradation of misfolded chaperone substrates via its interaction with STUB1/CHIP: recruited to monoubiquitinated STUB1/CHIP, and restricts the length of ubiquitin chain attached to STUB1/CHIP substrates and preventing further chain extension. Interacts with key regulators of transcription and represses transcription: acts as a histone-binding protein that regulates transcription. Acts as a negative regulator of mTORC1 signaling in response to amino acid deprivation by mediating deubiquitination of RHEB, thereby promoting RHEB inactivation by the TSC-TBC complex. Regulates autophagy via the deubiquitination of 'Lys-402' of BECN1 leading to the stabilization of BECN1. In Homo sapiens (Human), this protein is Ataxin-3.